The following is a 310-amino-acid chain: MEWKGRDVISVRDFSKEDIEFVLKIAERLEERLNKKGHLEYARGKILATLFFEPSTRTRLSFESAMHRLGGSVIGFSSAASTSVKKGESLADTIKTVEQYSDVIVIRHPMEGAARLAAEVAEIPVINAGDGSNQHPTQTLLDLYTIKRAFGRIDGLRIGLLGDLKYGRTVHSLAEALAFYDVELYLISPELLRMPKHIVEELREKGVKVHETTDLEGTVPELDVLYVTRIQRERFPDEQEYLKVKGSYQVNCAVLKNAKESLKIMHPLPRVDEIHPEVDRTPHALYFRQVFSGVPVRMALLGLTLGVLEG.

Residues Arg-57 and Thr-58 each coordinate carbamoyl phosphate. Residue Lys-86 participates in L-aspartate binding. Residues Arg-107, His-135, and Gln-138 each coordinate carbamoyl phosphate. L-aspartate is bound by residues Arg-168 and Arg-229. Residues Leu-268 and Pro-269 each coordinate carbamoyl phosphate.

It belongs to the aspartate/ornithine carbamoyltransferase superfamily. ATCase family. Heterooligomer of catalytic and regulatory chains.

It carries out the reaction carbamoyl phosphate + L-aspartate = N-carbamoyl-L-aspartate + phosphate + H(+). The protein operates within pyrimidine metabolism; UMP biosynthesis via de novo pathway; (S)-dihydroorotate from bicarbonate: step 2/3. In terms of biological role, catalyzes the condensation of carbamoyl phosphate and aspartate to form carbamoyl aspartate and inorganic phosphate, the committed step in the de novo pyrimidine nucleotide biosynthesis pathway. In Thermococcus onnurineus (strain NA1), this protein is Aspartate carbamoyltransferase catalytic subunit.